Here is a 126-residue protein sequence, read N- to C-terminus: Small ribosomal subunit protein uS12 (126 aa).

The segment at 1–26 is disordered; it reads MPTINQLVRKGRASETTKSKSPALQD. Asp89 is modified (3-methylthioaspartic acid). The segment at 101–126 is disordered; it reads SLDTQGVKDRKQARSKYGAKRAKAAK. Over residues 113-126 the composition is skewed to basic residues; it reads ARSKYGAKRAKAAK.

It belongs to the universal ribosomal protein uS12 family. In terms of assembly, part of the 30S ribosomal subunit. Contacts proteins S8 and S17. May interact with IF1 in the 30S initiation complex.

Functionally, with S4 and S5 plays an important role in translational accuracy. Its function is as follows. Interacts with and stabilizes bases of the 16S rRNA that are involved in tRNA selection in the A site and with the mRNA backbone. Located at the interface of the 30S and 50S subunits, it traverses the body of the 30S subunit contacting proteins on the other side and probably holding the rRNA structure together. The combined cluster of proteins S8, S12 and S17 appears to hold together the shoulder and platform of the 30S subunit. This Burkholderia pseudomallei (strain 1106a) protein is Small ribosomal subunit protein uS12.